A 174-amino-acid polypeptide reads, in one-letter code: Chorismate pyruvate-lyase (174 aa).

Substrate contacts are provided by Met-36, Arg-78, Leu-116, and Glu-157.

This sequence belongs to the UbiC family. In terms of assembly, monomer.

The protein localises to the cytoplasm. The enzyme catalyses chorismate = 4-hydroxybenzoate + pyruvate. It functions in the pathway cofactor biosynthesis; ubiquinone biosynthesis. Removes the pyruvyl group from chorismate, with concomitant aromatization of the ring, to provide 4-hydroxybenzoate (4HB) for the ubiquinone pathway. This Serratia proteamaculans (strain 568) protein is Chorismate pyruvate-lyase.